Reading from the N-terminus, the 465-residue chain is MKWDKLLNDKRRRESGVTRSKNTDVRSAFENDFQRIVMSASFRRLQDKTQVFPLEKSDFVRTRLTHSMEVSTIAKSMGNMVTHTIQEEKLDQDFTKDHADKIPEILACAGLLHDMGNPPFGHFGEESIREWFRDNLATITYKNKSLAEILTPQMKEDFYYFEGNAQVLRVVSKLHYLFDQYGLNLTFATLNAVIKYPVSSLKVNKKQIKSKKLGYFYADESLFNEITTATEALDNRHPLTYLLEVADDIAYLNADLEDGVKKGIVNITQILKGFEEVEEHNKVTAACYNELKKKSERYEGQEESFIVQQWLASNVRGQLINRSLEVFYENYDAIMAGTFNDSLIDASSAEQLVQILQSLSFTYIYQDKGIVESEIAGNEIISKLLETFIPAVIYYDSETPERQTAKDKRLLTLISDNYLGCYRKNAEGESETMKLYLRLLLVTDFICGMTDSYAKDLYQRLNGLS.

The segment at Met1 to Asn22 is disordered. An HD domain is found at Arg63 to Leu252.

The protein belongs to the dGTPase family. Type 3 subfamily.

The chain is Deoxyguanosinetriphosphate triphosphohydrolase-like protein from Listeria innocua serovar 6a (strain ATCC BAA-680 / CLIP 11262).